The primary structure comprises 883 residues: Histidine--tRNA ligase, cytoplasmic (883 aa).

The protein belongs to the class-II aminoacyl-tRNA synthetase family.

The protein resides in the cytoplasm. It is found in the cytosol. The enzyme catalyses tRNA(His) + L-histidine + ATP = L-histidyl-tRNA(His) + AMP + diphosphate + H(+). This Arabidopsis thaliana (Mouse-ear cress) protein is Histidine--tRNA ligase, cytoplasmic.